We begin with the raw amino-acid sequence, 342 residues long: Foldase protein PrsA (342 aa).

Positions 1–22 are cleaved as a signal peptide; it reads MVSVKKIVASALVGVLMFSAVG. Residue C23 is the site of N-palmitoyl cysteine attachment. C23 is lipidated: S-diacylglycerol cysteine. A PpiC domain is found at 189–284; that stretch reads DSGVLTKHLL…FGYHIIQAGA (96 aa).

It belongs to the PrsA family.

The protein resides in the cell membrane. The catalysed reaction is [protein]-peptidylproline (omega=180) = [protein]-peptidylproline (omega=0). In terms of biological role, plays a major role in protein secretion by helping the post-translocational extracellular folding of several secreted proteins. The polypeptide is Foldase protein PrsA (Clostridium perfringens (strain ATCC 13124 / DSM 756 / JCM 1290 / NCIMB 6125 / NCTC 8237 / Type A)).